The following is a 116-amino-acid chain: MRHKHGYRKLGRTSSHRKALLKNLAIALIEHNKIETGIYKAKELRSYIEKLTTAARVGDFNAHRHVFAYLQNKEATHKLVTEIAPKYAQRNGGYTRIQRTTFRRGDASTLATIEFV.

It belongs to the bacterial ribosomal protein bL17 family. As to quaternary structure, part of the 50S ribosomal subunit. Contacts protein L32.

The protein is Large ribosomal subunit protein bL17 of Helicobacter pylori (strain P12).